Consider the following 25-residue polypeptide: Ocellatin-F1 (25 aa).

Leucine 25 carries the post-translational modification Leucine amide.

It belongs to the frog skin active peptide (FSAP) family. Ocellatin subfamily. In terms of tissue distribution, expressed by the skin glands.

Its subcellular location is the secreted. Antibacterial peptide that inhibits reference strains of both Gram-negative bacteria (E.coli, P.aeruginosa, E.cloacae, K.pneumoniae, and A.actinomycetemcomitans) and Gram-positive bacteria (S.aureus) with relatively low potencies (MIC=25-400 uM). Shows antifungal activity against C.lusitaniae (MIC=50.25 uM), but no activity against C.albicans. In the presence of an alkaloid (bufotenine), inhibits cellular infection by the rabies virus. The peptide shows very low hemolytic activity against rabbit erythrocytes. The low amphipathicity of alpha-helices demonstrated by wheel projection as well as the low cationicity may explain the low antibacterial and hemolytic potencies. This is Ocellatin-F1 from Leptodactylus labyrinthicus (Labyrinth frog).